The chain runs to 467 residues: UDP-N-acetylmuramate--L-alanine ligase (467 aa).

114 to 120 (GTHGKTT) is an ATP binding site.

It belongs to the MurCDEF family.

The protein localises to the cytoplasm. It catalyses the reaction UDP-N-acetyl-alpha-D-muramate + L-alanine + ATP = UDP-N-acetyl-alpha-D-muramoyl-L-alanine + ADP + phosphate + H(+). It functions in the pathway cell wall biogenesis; peptidoglycan biosynthesis. Cell wall formation. The chain is UDP-N-acetylmuramate--L-alanine ligase from Rhodopseudomonas palustris (strain ATCC BAA-98 / CGA009).